The chain runs to 95 residues: Small ribosomal subunit protein uS19 (95 aa).

The interval 76 to 95 (PTRRFGGHADKKAATKGQVR) is disordered.

This sequence belongs to the universal ribosomal protein uS19 family.

Protein S19 forms a complex with S13 that binds strongly to the 16S ribosomal RNA. The sequence is that of Small ribosomal subunit protein uS19 from Pseudothermotoga lettingae (strain ATCC BAA-301 / DSM 14385 / NBRC 107922 / TMO) (Thermotoga lettingae).